A 170-amino-acid polypeptide reads, in one-letter code: Ribosome maturation factor RimM (170 aa).

The PRC barrel domain maps to 98-170 (PDEYYWVDLE…LIVVDWDPDF (73 aa)).

The protein belongs to the RimM family. In terms of assembly, binds ribosomal protein uS19.

The protein localises to the cytoplasm. Functionally, an accessory protein needed during the final step in the assembly of 30S ribosomal subunit, possibly for assembly of the head region. Essential for efficient processing of 16S rRNA. May be needed both before and after RbfA during the maturation of 16S rRNA. It has affinity for free ribosomal 30S subunits but not for 70S ribosomes. This is Ribosome maturation factor RimM from Xanthomonas campestris pv. campestris (strain 8004).